Here is a 581-residue protein sequence, read N- to C-terminus: MAYEFDLEDFNDNLEPFGFNCPAKDHFIEKLEGLCKTFRKSGEDIVDDVVSVMSNLGQKSVDSGILAKLEENLEAQAQKTVHTPRSVKKPARGRVPLAEKSGFILSGDPDDIEKPSHHLTNSAIAKLEGHFLDFSPFPGSPANEKFLKRADPSHVVTTIRGKKYQDKGLKGSTKSDDTIRIISKTPSTLYGGDKSSMVIEAKAQRMADIAHRIQKSFEEIVDWGNPSIPSVDVVYTYGQVIHDETKDNEKFGEHSVALMINDEDGTMIRMDFSKMTEDITLFPGQIIAVRGTNETGEELQVDKIFQPAALPVNPVETDTTKEIWFACGPYTATDNCGYEHLCELLDKVVAEKPDILMLAGPFVDKKNTFLNKPTFNITYDNLLEDLLLKVKETLVGTKTQVIIQPNASRDLCVPPVFPSAPFQQNRKLDKIKKELIFVADPCIFRISGVEVAMTSSEPIQALSNTEFHRSANQENIDRVARLSSHLLTQQCMYPLEPTEVPASMGDLLDVCCIGSTPHIVFAPTKLAPSAKCVNGSVFINSSTLAKGPTGNYAKMSINLNAGELMPGETVADYAQIQILKI.

The protein belongs to the DNA polymerase alpha subunit B family. As to quaternary structure, DNA polymerase alpha:primase is a four subunit enzyme complex, which is assembled throughout the cell cycle, and consists of the two DNA polymerase subunits A and B, and the DNA primase large and small subunits. Subunit B binds to subunit A.

It localises to the nucleus. In terms of biological role, may play an essential role at the early stage of chromosomal DNA replication by coupling the polymerase alpha/primase complex to the cellular replication machinery. Required for the distribution of pie-1 in cell divsion. The sequence is that of DNA polymerase alpha subunit B (div-1) from Caenorhabditis elegans.